The primary structure comprises 428 residues: C4-dicarboxylate transport protein (428 aa).

Helical transmembrane passes span 8 to 28 (SLYFQVLTAIAIGILLGHFYP), 44 to 64 (LIKMIIAPVIFCTVVTGIAGM), 76 to 96 (VALLYFEIVSTIALIIGLIIV), 142 to 162 (IGAFASGNILQVLLFAVLFGF), 184 to 204 (VIFGIINMIMRLAPIGAFGAM), 222 to 242 (LIICFYITCILFVVLVLGSIA), 326 to 346 (IVHQITLLIVLLLSSKGAAGV), and 352 to 372 (IVLAATLSAVGHLPVAGLALI).

The protein belongs to the dicarboxylate/amino acid:cation symporter (DAACS) (TC 2.A.23) family.

Its subcellular location is the cell inner membrane. Its function is as follows. Responsible for the transport of dicarboxylates such as succinate, fumarate, and malate from the periplasm across the membrane. This Shigella dysenteriae serotype 1 (strain Sd197) protein is C4-dicarboxylate transport protein.